Consider the following 991-residue polypeptide: Phosphate metabolism protein 7 (991 aa).

Over 1-9 (MADSSSTSA) the chain is Extracellular. Residues 10–30 (FISTLIIYGLTAVVFVWLFLL) traverse the membrane as a helical segment. Residues 31–91 (LRPKNRRVYE…TSVDGYFLLR (61 aa)) lie on the Cytoplasmic side of the membrane. Residues 92–112 (YIGIVGSLSFVGCLLLLPILL) traverse the membrane as a helical segment. The Extracellular segment spans residues 113–138 (PVNATNGNNLQGFELLSFSNVTNKNR). Residues asparagine 115 and asparagine 132 are each glycosylated (N-linked (GlcNAc...) asparagine). A helical transmembrane segment spans residues 139–159 (FYAHVFLSWIFFGLFTYVIYK). Topologically, residues 160 to 388 (ELYYYVVFRH…ERHSRRAVAN (229 aa)) are cytoplasmic. The helical transmembrane segment at 389–409 (TIMVLLIIFWAFPVAVVGIIS) threads the bilayer. Over 410–437 (NVNFLTDKVPFLRFINNMPTFLMGVITG) the chain is Extracellular. A helical membrane pass occupies residues 438–458 (LLPTIALVVLMSLVPPFIVML). At 459 to 471 (GKLSGCVTRQETD) the chain is on the cytoplasmic side. The chain crosses the membrane as a helical span at residues 472–492 (LYSQAWYYAFAVIQIFLVVTA). Topologically, residues 493-523 (TSSASSTVDSIIDRPRSAMTLLANNLPKASN) are extracellular. Residues 524 to 544 (FYIMYFILKGLTGPTWTILQA) form a helical membrane-spanning segment. Residues 545–582 (VNLLLSKVLGRVLDSTPRQKWNRYNTLATPRMGIVYPG) are Cytoplasmic-facing. A helical membrane pass occupies residues 583–603 (IEILVCIYICYSIIAPILLFF). A topological domain (extracellular) is located at residue serine 604. The helical transmembrane segment at 605 to 625 (TVMLTLLYVAYLYNLNYVFGF) threads the bilayer. At 626–637 (SFDLKGRNYPRA) the chain is on the cytoplasmic side. The helical transmembrane segment at 638–658 (LFQIFVGIYLSEVCLLGLFIM) threads the bilayer. Residues 659–661 (AKT) lie on the Extracellular side of the membrane. Residues 662–682 (WGPLVLEVFWIVVTALAHIYM) traverse the membrane as a helical segment. Residues 683-991 (KRKFIPLFDA…PPDYEPEAKK (309 aa)) are Cytoplasmic-facing. The segment at 749–787 (KANLIPDNDGSSENGTPSNPFESGSERASLSGSNAESDS) is disordered. The span at 757–785 (DGSSENGTPSNPFESGSERASLSGSNAES) shows a compositional bias: polar residues.

The protein belongs to the CSC1 (TC 1.A.17) family.

The protein localises to the cell membrane. Acts as an osmosensitive calcium-permeable cation channel. In Saccharomyces cerevisiae (strain ATCC 204508 / S288c) (Baker's yeast), this protein is Phosphate metabolism protein 7 (PHM7).